The sequence spans 205 residues: LexA repressor (205 aa).

The H-T-H motif DNA-binding region spans 28–48 (RAEIAKRLGFKSANAAEEHLK). Residues Ser-122 and Lys-159 each act as for autocatalytic cleavage activity in the active site.

This sequence belongs to the peptidase S24 family. In terms of assembly, homodimer.

It carries out the reaction Hydrolysis of Ala-|-Gly bond in repressor LexA.. Its function is as follows. Represses a number of genes involved in the response to DNA damage (SOS response), including recA and lexA. In the presence of single-stranded DNA, RecA interacts with LexA causing an autocatalytic cleavage which disrupts the DNA-binding part of LexA, leading to derepression of the SOS regulon and eventually DNA repair. The sequence is that of LexA repressor from Shewanella woodyi (strain ATCC 51908 / MS32).